The following is a 485-amino-acid chain: tRNA-2-methylthio-N(6)-dimethylallyladenosine synthase (485 aa).

The region spanning 37-154 (GKLYIKTHGC…LPELIRARRE (118 aa)) is the MTTase N-terminal domain. Cys46, Cys83, Cys117, Cys191, Cys195, and Cys198 together coordinate [4Fe-4S] cluster. A Radical SAM core domain is found at 177-416 (RADGPSAFVS…HINAHAAGIS (240 aa)). In terms of domain architecture, TRAM spans 417–480 (QRMVGSVQRV…SNSLRGRIQL (64 aa)).

Belongs to the methylthiotransferase family. MiaB subfamily. As to quaternary structure, monomer. [4Fe-4S] cluster is required as a cofactor.

The protein resides in the cytoplasm. The catalysed reaction is N(6)-dimethylallyladenosine(37) in tRNA + (sulfur carrier)-SH + AH2 + 2 S-adenosyl-L-methionine = 2-methylsulfanyl-N(6)-dimethylallyladenosine(37) in tRNA + (sulfur carrier)-H + 5'-deoxyadenosine + L-methionine + A + S-adenosyl-L-homocysteine + 2 H(+). Its function is as follows. Catalyzes the methylthiolation of N6-(dimethylallyl)adenosine (i(6)A), leading to the formation of 2-methylthio-N6-(dimethylallyl)adenosine (ms(2)i(6)A) at position 37 in tRNAs that read codons beginning with uridine. The polypeptide is tRNA-2-methylthio-N(6)-dimethylallyladenosine synthase (Xanthomonas campestris pv. campestris (strain 8004)).